Consider the following 100-residue polypeptide: Signal recognition particle 19 kDa protein (100 aa).

It belongs to the SRP19 family. In terms of assembly, part of the signal recognition particle protein translocation system, which is composed of SRP and FtsY. Archaeal SRP consists of a 7S RNA molecule of 300 nucleotides and two protein subunits: SRP54 and SRP19.

The protein resides in the cytoplasm. Its function is as follows. Involved in targeting and insertion of nascent membrane proteins into the cytoplasmic membrane. Binds directly to 7S RNA and mediates binding of the 54 kDa subunit of the SRP. The chain is Signal recognition particle 19 kDa protein from Caldivirga maquilingensis (strain ATCC 700844 / DSM 13496 / JCM 10307 / IC-167).